The sequence spans 105 residues: Small ribosomal subunit protein uS10 (105 aa).

This sequence belongs to the universal ribosomal protein uS10 family. As to quaternary structure, part of the 30S ribosomal subunit.

Its function is as follows. Involved in the binding of tRNA to the ribosomes. The protein is Small ribosomal subunit protein uS10 of Acidobacterium capsulatum (strain ATCC 51196 / DSM 11244 / BCRC 80197 / JCM 7670 / NBRC 15755 / NCIMB 13165 / 161).